The sequence spans 662 residues: UPF0313 protein CPE1196 (662 aa).

A Radical SAM core domain is found at 296–567; it reads AIEEVKFSLV…AMQRALLQFK (272 aa). [4Fe-4S] cluster-binding residues include C310, C314, and C317. The disordered stretch occupies residues 597–662; sequence RDKNSFGKGN…QRGSKGKKRR (66 aa). Over residues 618–632 the composition is skewed to basic and acidic residues; it reads NRNENSGRRESEDKK. A compositionally biased stretch (basic residues) spans 633–644; that stretch reads RSSHSKKQRGNK.

It belongs to the UPF0313 family. [4Fe-4S] cluster serves as cofactor.

The chain is UPF0313 protein CPE1196 from Clostridium perfringens (strain 13 / Type A).